A 987-amino-acid polypeptide reads, in one-letter code: Voltage-gated delayed rectifier potassium channel KCNH1 (987 aa).

The Cytoplasmic segment spans residues 1 to 220 (MTMAGGRKGL…LHYCVFKTTW (220 aa)). Positions 14–94 (QNTFLENIVR…QTFENYEMNS (81 aa)) constitute a PAS domain. In terms of domain architecture, PAC spans 93–145 (NSFEILMYKKNRTPVWFFVKIAPIRNEQDKVVLFLCTFSDITAFKQPIEDDSC). The required for phosphatidylinositol bisphosphate binding stretch occupies residues 151–162 (FARLTRALTSSR). A helical membrane pass occupies residues 221-241 (DWIILILTFYTAILVPYNVSF). The Extracellular segment spans residues 242 to 248 (KTRQNNV). The helical transmembrane segment at 249-269 (AWLVVDSIVDVIFLVDIVLNF) threads the bilayer. Over 270 to 290 (HTTFVGPAGEVISDPKLIRMN) the chain is Cytoplasmic. The chain crosses the membrane as a helical span at residues 291–309 (YLKTWFVIDLLSCLPYDVI). Residues 310–345 (NAFENVDEVSAFMGDPGKIGFADQIPPPLEGRESQG) lie on the Extracellular side of the membrane. Residues 346 to 368 (ISSLFSSLKVVRLLRLGRVARKL) form a helical; Voltage-sensor membrane-spanning segment. The Cytoplasmic segment spans residues 369–377 (DHYIEYGAA). Residues 378–399 (VLVLLVCVFGLAAHWMACIWYS) form a helical membrane-spanning segment. Topologically, residues 400-448 (IGDYEIFDEDTKTIRNNSWLYQLAMDIGTPYQFNGSGSGKWEGGPSKNS) are extracellular. Asparagine 415 and asparagine 433 each carry an N-linked (GlcNAc...) asparagine glycan. The segment at residues 449-470 (VYISSLYFTMTSLTSVGFGNIA) is an intramembrane region (pore-forming). Residues 463-468 (SVGFGN) carry the Selectivity filter motif. Topologically, residues 471–477 (PSTDIEK) are extracellular. Residues 478-498 (IFAVAIMMIGSLLYATIFGNV) traverse the membrane as a helical segment. Residues 499-987 (TTIFQQMYAN…ESERDIFGAS (489 aa)) lie on the Cytoplasmic side of the membrane. Residues 673-770 (KRDALQKVLE…LDDLDVEKGS (98 aa)) are calmodulin-binding. Residues 699 to 701 (YNL) form an interaction with cyclic nucleotide-binding pocket region. Residues 922-962 (AAVLEVKHELKEDIKALSTKMTSIEKQLSEILRILTSRRSS) are CAD (involved in subunit assembly). Residues 960–987 (RSSQSPQELFEISRPQSPESERDIFGAS) are disordered. Phosphoserine is present on residues serine 972, serine 976, and serine 979. The segment covering 978–987 (ESERDIFGAS) has biased composition (basic and acidic residues).

The protein belongs to the potassium channel family. H (Eag) (TC 1.A.1.20) subfamily. Kv10.1/KCNH1 sub-subfamily. Homomultimer. The potassium channel is composed of a homo- or heterotetrameric complex of pore-forming alpha subunits that can associate with modulating beta subunits. Heteromultimer with KCNH5/EAG2. Interacts with ALG10B. Interacts with RABEP1. Interacts (via C-terminus) with CTTN. Interacts (via C-terminal cytoplasmic region) with Ca(2+)-bound calmodulin. Post-translationally, channel activity is regulated via tyrosine phosphorylation/dephosphorylation by SRC and PTPN6. In terms of tissue distribution, detected in cerebellum, cortex and retina.

It is found in the cell membrane. It localises to the nucleus inner membrane. The protein localises to the cell projection. Its subcellular location is the dendrite. The protein resides in the axon. It is found in the presynaptic cell membrane. It localises to the perikaryon. The protein localises to the postsynaptic density membrane. Its subcellular location is the early endosome membrane. The enzyme catalyses K(+)(in) = K(+)(out). Channel activity is inhibited by interaction with Ca(2+)-bound calmodulin. Interaction of a single pore-forming alpha subunit with a calmodulin chain is sufficient to promote channel closure. Extracellular magnesium ion concentrations up to 4 mM modulate channel activity by slowing down current activation in a reversible fashion. Channel activity is not regulated by cyclic nucleotides. Channel activity is inhibited by binding intracellular phosphatidylinositol-3,5-bisphosphate and phosphatidylinositol-4,5-bisphosphate (PIP2), but is not inhibited by phosphatidylinositol 4-phosphate. Pore-forming (alpha) subunit of a voltage-gated delayed rectifier potassium channel that mediates outward-rectifying potassium currents which, on depolarization, reaches a steady-state level and do not inactivate. The activation kinetics depend on the prepulse potential and external divalent cation concentration. With negative prepulses, the current activation is delayed and slowed down several fold, whereas more positive prepulses speed up activation. The time course of activation is biphasic with a fast and a slowly activating current component. Activates at more positive membrane potentials and exhibit a steeper activation curve. Channel properties are modulated by subunit assembly. Mediates IK(NI) current in myoblasts. Involved in the regulation of cell proliferation and differentiation, in particular adipogenic and osteogenic differentiation in bone marrow-derived mesenchymal stem cells (MSCs). The protein is Voltage-gated delayed rectifier potassium channel KCNH1 of Bos taurus (Bovine).